The primary structure comprises 278 residues: 3-methyl-2-oxobutanoate hydroxymethyltransferase (278 aa).

Residues Asp52 and Asp91 each contribute to the Mg(2+) site. Residues 52–53 (DS), Asp91, and Lys121 each bind 3-methyl-2-oxobutanoate. A Mg(2+)-binding site is contributed by Glu123. Glu190 (proton acceptor) is an active-site residue.

Belongs to the PanB family. As to quaternary structure, homodecamer; pentamer of dimers. Mg(2+) serves as cofactor.

The protein resides in the cytoplasm. It catalyses the reaction 3-methyl-2-oxobutanoate + (6R)-5,10-methylene-5,6,7,8-tetrahydrofolate + H2O = 2-dehydropantoate + (6S)-5,6,7,8-tetrahydrofolate. It participates in cofactor biosynthesis; (R)-pantothenate biosynthesis; (R)-pantoate from 3-methyl-2-oxobutanoate: step 1/2. Its function is as follows. Catalyzes the reversible reaction in which hydroxymethyl group from 5,10-methylenetetrahydrofolate is transferred onto alpha-ketoisovalerate to form ketopantoate. The polypeptide is 3-methyl-2-oxobutanoate hydroxymethyltransferase (Rhodospirillum rubrum (strain ATCC 11170 / ATH 1.1.1 / DSM 467 / LMG 4362 / NCIMB 8255 / S1)).